Consider the following 190-residue polypeptide: Large ribosomal subunit protein bL17 (190 aa).

A compositionally biased stretch (low complexity) spans 135 to 165; it reads AKAAPAAEEAPAEEAPAAEEAATEEAPAAEE. The tract at residues 135–190 is disordered; the sequence is AKAAPAAEEAPAEEAPAAEEAATEEAPAAEETATEEAAAEEAPAAEEAPAEEKDAK.

The protein belongs to the bacterial ribosomal protein bL17 family. Part of the 50S ribosomal subunit. Contacts protein L32.

In Pseudarthrobacter chlorophenolicus (strain ATCC 700700 / DSM 12829 / CIP 107037 / JCM 12360 / KCTC 9906 / NCIMB 13794 / A6) (Arthrobacter chlorophenolicus), this protein is Large ribosomal subunit protein bL17.